The chain runs to 2151 residues: Protein PRR14L (2151 aa).

2 stretches are compositionally biased toward basic and acidic residues: residues 112–123 (KRSESMEPKVFR) and 134–154 (EPSE…EEKT). Disordered stretches follow at residues 112 to 160 (KRSE…SQED), 206 to 225 (GTKT…KDLS), and 314 to 350 (QLHG…SDLS). Serine 157 is subject to Phosphoserine. Over residues 322 to 350 (QPSSTHDSPTATSPLKENSEVSCFTSDLS) the composition is skewed to polar residues. Phosphoserine occurs at positions 582 and 945. The segment at 974–1017 (SNQNRPDECKSEGQSAKEMLSSDQRETVTEPHGEVNHNQKDLLV) is disordered. Basic and acidic residues predominate over residues 996-1013 (DQRETVTEPHGEVNHNQK). Serine 1029 is subject to Phosphoserine. Residues 1091 to 1103 (DSRSTLSRRELDA) show a composition bias toward basic and acidic residues. Disordered regions lie at residues 1091 to 1115 (DSRS…DSDF), 1178 to 1226 (DSHY…SCHD), 1782 to 1802 (TGVH…PLQD), and 1986 to 2012 (AACP…KVSQ). Over residues 1178-1187 (DSHYGQQDKG) the composition is skewed to polar residues. The span at 1188–1201 (TSLRETQEMTEGSR) shows a compositional bias: basic and acidic residues.

The sequence is that of Protein PRR14L (PRR14L) from Homo sapiens (Human).